The following is a 281-amino-acid chain: uncharacterized protein (281 aa).

It localises to the plastid. Its subcellular location is the chloroplast. This is an uncharacterized protein from Euglena gracilis.